The chain runs to 208 residues: MARYIGPTCKLARREGADLSLKSPARALDSKCKLEQKPGQHGASRKGKLSDYATQLREKQKVKRIYGLLERQFRNYYKKASTKKGNTGENLLQLLETRLDNVCYRMGFAVTRPAARQLVSHRCVLVNGKSVNLASYQIKAGDAITLSEKAQKQLRVQEALTVAEQHDMTPSWVEVDSKKFSGVFKAVPDRADLPSDINEALIVELYSK.

Residues 97–160 (TRLDNVCYRM…QKQLRVQEAL (64 aa)) form the S4 RNA-binding domain.

The protein belongs to the universal ribosomal protein uS4 family. As to quaternary structure, part of the 30S ribosomal subunit. Contacts protein S5. The interaction surface between S4 and S5 is involved in control of translational fidelity.

Functionally, one of the primary rRNA binding proteins, it binds directly to 16S rRNA where it nucleates assembly of the body of the 30S subunit. In terms of biological role, with S5 and S12 plays an important role in translational accuracy. This is Small ribosomal subunit protein uS4 from Xanthomonas oryzae pv. oryzae (strain MAFF 311018).